The chain runs to 223 residues: Large ribosomal subunit protein uL4 (223 aa).

Residues 49–106 form a disordered region; the sequence is AAARQGTHSTKTRGEVSGGGRKPYRQKGTGRARQGSTRAPQFTGGGVVHGPKPRDYSQ.

The protein belongs to the universal ribosomal protein uL4 family. Part of the 50S ribosomal subunit.

Functionally, one of the primary rRNA binding proteins, this protein initially binds near the 5'-end of the 23S rRNA. It is important during the early stages of 50S assembly. It makes multiple contacts with different domains of the 23S rRNA in the assembled 50S subunit and ribosome. In terms of biological role, forms part of the polypeptide exit tunnel. In Mycobacterium bovis (strain ATCC BAA-935 / AF2122/97), this protein is Large ribosomal subunit protein uL4.